Consider the following 330-residue polypeptide: DNA-directed RNA polymerase subunit alpha (330 aa).

The segment at 1-231 is alpha N-terminal domain (alpha-NTD); sequence MAILAFQKPD…IYHFMLFSDE (231 aa). Residues 253–330 form an alpha C-terminal domain (alpha-CTD) region; sequence MRQLLKTKLV…DISKYKLDKE (78 aa).

This sequence belongs to the RNA polymerase alpha chain family. Homodimer. The RNAP catalytic core consists of 2 alpha, 1 beta, 1 beta' and 1 omega subunit. When a sigma factor is associated with the core the holoenzyme is formed, which can initiate transcription.

It catalyses the reaction RNA(n) + a ribonucleoside 5'-triphosphate = RNA(n+1) + diphosphate. Functionally, DNA-dependent RNA polymerase catalyzes the transcription of DNA into RNA using the four ribonucleoside triphosphates as substrates. The sequence is that of DNA-directed RNA polymerase subunit alpha from Phocaeicola vulgatus (strain ATCC 8482 / DSM 1447 / JCM 5826 / CCUG 4940 / NBRC 14291 / NCTC 11154) (Bacteroides vulgatus).